Consider the following 462-residue polypeptide: Juvenile hormone epoxide hydrolase (462 aa).

Residues 4 to 24 (ILSSFVAGVAIGSGLVITYVL) traverse the membrane as a helical segment. The active-site Nucleophile is Asp227. Tyr372 acts as the Proton donor in catalysis. His428 functions as the Proton acceptor in the catalytic mechanism.

It belongs to the peptidase S33 family.

Its subcellular location is the microsome membrane. The protein localises to the endoplasmic reticulum membrane. It carries out the reaction cis-stilbene oxide + H2O = (1R,2R)-hydrobenzoin. The catalysed reaction is 1-(4-methoxyphenyl)-N-methyl-N-[(3-methyloxetan-3-yl)methyl]methanamine + H2O = 2-{[(4-methoxybenzyl)(methyl)amino]methyl}-2-methylpropane-1,3-diol. Functionally, catalyzes juvenile hormone hydrolysis. This is Juvenile hormone epoxide hydrolase from Manduca sexta (Tobacco hawkmoth).